The chain runs to 153 residues: SsrA-binding protein (153 aa).

Positions 129-153 (KREDMKKKDQSREMAQALREKSKSH) are disordered.

The protein belongs to the SmpB family.

The protein localises to the cytoplasm. In terms of biological role, required for rescue of stalled ribosomes mediated by trans-translation. Binds to transfer-messenger RNA (tmRNA), required for stable association of tmRNA with ribosomes. tmRNA and SmpB together mimic tRNA shape, replacing the anticodon stem-loop with SmpB. tmRNA is encoded by the ssrA gene; the 2 termini fold to resemble tRNA(Ala) and it encodes a 'tag peptide', a short internal open reading frame. During trans-translation Ala-aminoacylated tmRNA acts like a tRNA, entering the A-site of stalled ribosomes, displacing the stalled mRNA. The ribosome then switches to translate the ORF on the tmRNA; the nascent peptide is terminated with the 'tag peptide' encoded by the tmRNA and targeted for degradation. The ribosome is freed to recommence translation, which seems to be the essential function of trans-translation. The polypeptide is SsrA-binding protein (Geobacter sulfurreducens (strain ATCC 51573 / DSM 12127 / PCA)).